A 408-amino-acid polypeptide reads, in one-letter code: PTI1-like tyrosine-protein kinase 3 (408 aa).

Positions 59-76 (SSENEHLRSPKHHNDFGH) are enriched in basic and acidic residues. The segment at 59-91 (SSENEHLRSPKHHNDFGHHTRKPQAAVKPDALK) is disordered. The 283-residue stretch at 113–395 (FGSKSLIGEG…IVVKALQPLL (283 aa)) folds into the Protein kinase domain. Residues 119–127 (IGEGSYGRA) and K141 each bind ATP. D245 acts as the Proton acceptor in catalysis.

The protein belongs to the protein kinase superfamily. Tyr protein kinase family. In terms of assembly, interacts with OXI1. Phosphorylated by OXI1.

Its subcellular location is the cell membrane. The catalysed reaction is L-tyrosyl-[protein] + ATP = O-phospho-L-tyrosyl-[protein] + ADP + H(+). This chain is PTI1-like tyrosine-protein kinase 3 (PTI13), found in Arabidopsis thaliana (Mouse-ear cress).